Here is a 5154-residue protein sequence, read N- to C-terminus: Hydrocephalus-inducing protein (5154 aa).

Residues 409 to 800 (MILEDSVLDP…VLLSSPSPCG (392 aa)) form an interaction with KIF9 region. Basic and acidic residues predominate over residues 997-1009 (RPKEKQSKKEPGK). Disordered stretches follow at residues 997–1033 (RPKEKQSKKEPGKKGSTSSSRRQSKASQEPTDNGNPV), 1966–1988 (ENEEEEMNTSDQGTTSTKRTSIS), 2193–2222 (ADSHFTGSQKQHHQHQSETPQVQISSSPLL), 2383–2423 (KLQQ…QGAT), 2521–2572 (HTGT…KAER), and 2706–2762 (KAQE…DIDQ). A compositionally biased stretch (low complexity) spans 1010–1024 (KGSTSSSRRQSKASQ). Residues 1948–1977 (EMKKSKEEHMKAKYMENLENEEEEMNTSDQ) are a coiled coil. Polar residues-rich tracts occupy residues 1974-1988 (TSDQGTTSTKRTSIS) and 2209-2220 (SETPQVQISSSP). The stretch at 2308 to 2444 (YVVMKAQEKA…LKMESIERKV (137 aa)) forms a coiled coil. Composition is skewed to basic and acidic residues over residues 2383–2398 (KLQQELERQKEEDELK), 2523–2535 (GTDEMSHEADDQR), 2548–2572 (KDRERERLEKERAEKERLEREKAER), and 2721–2734 (KLKDKPEQVRETQK). Residues 2543-2588 (GRKGRKDRERERLEKERAEKERLEREKAERERLEKLKALEERSDVE) are a coiled coil.

Interacts with KIF9. In terms of tissue distribution, expressed in brain and testis. Expressed in ciliated epithelial cells lining bronchi and oviduct, and in spermatocytes.

The protein localises to the cell projection. It is found in the cilium. Its subcellular location is the cytoplasm. It localises to the cytoskeleton. The protein resides in the cilium axoneme. The protein localises to the flagellum. Its function is as follows. Required for ciliary motility. The sequence is that of Hydrocephalus-inducing protein (Hydin) from Mus musculus (Mouse).